We begin with the raw amino-acid sequence, 263 residues long: MKLKSFGVFGNPIKHSKSPLIHNACFLTFQKELGFLGHYHPILLPLESHIKSEFLHLGLSGANVTLPFKERAFQICDKIKGIALECGAVNTLVVENDELVGYNTDALGFWLSLGGEGYQSALILGSGGSAKALACELQKQGLKVSVLNRSARGLDFFQRLGCDCFMDPPKSTFDLIINATSASLNNELPLNKEVLKGYFKEGKLAYDLAYGFLTPFLSLAKELETPFQDGKDMLIYQAALSFEKFSASQIPYPKAFEVMRSVF.

Shikimate-binding positions include serine 16 to serine 18 and threonine 65. Lysine 69 functions as the Proton acceptor in the catalytic mechanism. 2 residues coordinate shikimate: asparagine 90 and aspartate 105. NADP(+)-binding positions include glycine 125–serine 129 and leucine 208. Residue tyrosine 210 participates in shikimate binding. Glycine 230 is an NADP(+) binding site.

It belongs to the shikimate dehydrogenase family. As to quaternary structure, homodimer.

It catalyses the reaction shikimate + NADP(+) = 3-dehydroshikimate + NADPH + H(+). Its pathway is metabolic intermediate biosynthesis; chorismate biosynthesis; chorismate from D-erythrose 4-phosphate and phosphoenolpyruvate: step 4/7. With respect to regulation, inhibited by curcumin, 3-(2-naphthyloxy)-4-oxo-2-(trifluoromethyl)-4H-chromen-7-yl 3-chlorobenzoate, butyl 2-{[3-(2-naphthyloxy)-4-oxo-2-(trifluoromethyl)-4H-chromen-7-yl]oxy}propanoate, 2-({2-[(2-{[2-(2,3-dimethylanilino)-2-oxoethyl]sulfanyl}-1,3-benzothiazol-6-yl)amino]-2-oxoethyl}sulfanyl)-N-(2-naphthyl)acetamide, and maesaquinone diacetate. Functionally, involved in the biosynthesis of the chorismate, which leads to the biosynthesis of aromatic amino acids. Catalyzes the reversible NADPH linked reduction of 3-dehydroshikimate (DHSA) to yield shikimate (SA). It can also use NAD to oxidize shikimate. The sequence is that of Shikimate dehydrogenase (NADP(+)) from Helicobacter pylori (Campylobacter pylori).